Reading from the N-terminus, the 420-residue chain is 2',3'-cyclic-nucleotide 3'-phosphodiesterase (420 aa).

At Ser9 the chain carries Phosphoserine. Phosphotyrosine is present on Tyr110. 3 positions are modified to phosphoserine: Ser169, Ser227, and Ser239. The Proton acceptor role is filled by His250. Thr252 is a substrate binding site. At Thr262 the chain carries Phosphothreonine. The active-site Proton donor is His329. Thr331 is a binding site for substrate. Phosphoserine is present on Ser358. A Cysteine methyl ester modification is found at Cys417. Cys417 carries the S-farnesyl cysteine lipid modification. A propeptide spans Thr418–Ile420 (removed in mature form).

It belongs to the 2H phosphoesterase superfamily. CNPase family. As to quaternary structure, exists as monomers and homodimers.

The protein resides in the membrane. The protein localises to the melanosome. It catalyses the reaction a nucleoside 2',3'-cyclic phosphate + H2O = a nucleoside 2'-phosphate + H(+). Its function is as follows. Catalyzes the formation of 2'-nucleotide products from 2',3'-cyclic substrates. May participate in RNA metabolism in the myelinating cell, CNP is the third most abundant protein in central nervous system myelin. The chain is 2',3'-cyclic-nucleotide 3'-phosphodiesterase from Rattus norvegicus (Rat).